We begin with the raw amino-acid sequence, 244 residues long: Cell division protein ZapD (244 aa).

Belongs to the ZapD family. As to quaternary structure, interacts with FtsZ.

The protein localises to the cytoplasm. In terms of biological role, cell division factor that enhances FtsZ-ring assembly. Directly interacts with FtsZ and promotes bundling of FtsZ protofilaments, with a reduction in FtsZ GTPase activity. The chain is Cell division protein ZapD from Shewanella baltica (strain OS185).